The sequence spans 697 residues: Serine/threonine-protein kinase Nek8 (697 aa).

The Protein kinase domain occupies 4-263 (YEKTKVVGRG…AHAICIRPLL (260 aa)). Residues 10-18 (VGRGAFGIV) and Lys-33 each bind ATP. Catalysis depends on Asp-128, which acts as the Proton acceptor. The residue at position 162 (Thr-162) is a Phosphothreonine; by autocatalysis. RCC1 repeat units lie at residues 417 to 468 (GIIM…VTNE), 469 to 520 (REVF…MSTQ), 521 to 586 (HQIL…VTEK), 587 to 636 (GQCF…IGAE), and 637 to 689 (GEVY…AVKP).

The protein belongs to the protein kinase superfamily. NEK Ser/Thr protein kinase family. NIMA subfamily. Mg(2+) serves as cofactor.

Its subcellular location is the cytoplasm. The protein resides in the cytoskeleton. It localises to the cell projection. It is found in the cilium. The protein localises to the cilium axoneme. Its subcellular location is the microtubule organizing center. The protein resides in the centrosome. It carries out the reaction L-seryl-[protein] + ATP = O-phospho-L-seryl-[protein] + ADP + H(+). The catalysed reaction is L-threonyl-[protein] + ATP = O-phospho-L-threonyl-[protein] + ADP + H(+). Functionally, required for renal tubular integrity. May regulate local cytoskeletal structure in kidney tubule epithelial cells. May regulate ciliary biogenesis through targeting of proteins to the cilia. Plays a role in organogenesis and is involved in the regulation of the Hippo signaling pathway. The chain is Serine/threonine-protein kinase Nek8 (nek8) from Danio rerio (Zebrafish).